A 559-amino-acid chain; its full sequence is GTP diphosphokinase CRSH2, chloroplastic (559 aa).

Residues methionine 1–glycine 37 constitute a chloroplast transit peptide. Positions serine 87 to methionine 187 constitute an HD domain. EF-hand domains follow at residues alanine 449–glycine 484 and lysine 486–lysine 518. Positions 462, 464, 466, 468, 473, 496, 498, 500, 502, and 507 each coordinate Ca(2+).

It belongs to the RelA/SpoT family. Expressed in shoots.

The protein resides in the plastid. It is found in the chloroplast. It carries out the reaction GTP + ATP = guanosine 3'-diphosphate 5'-triphosphate + AMP. Activated by calcium. Its function is as follows. Possesses calcium-dependent ppGpp (guanosine 3'-diphosphate 5'-diphosphate) synthetase activity in vitro and is able to functionally complement E.coli relA mutants. May be involved in a rapid plant ppGpp-mediated response to pathogens and other stresses. The protein is GTP diphosphokinase CRSH2, chloroplastic of Oryza sativa subsp. japonica (Rice).